The primary structure comprises 63 residues: UPF0391 membrane protein lpg2415 (63 aa).

Transmembrane regions (helical) follow at residues 4–24 (WALI…RGVA) and 33–53 (VLFF…LLGG).

This sequence belongs to the UPF0391 family.

Its subcellular location is the cell membrane. This chain is UPF0391 membrane protein lpg2415, found in Legionella pneumophila subsp. pneumophila (strain Philadelphia 1 / ATCC 33152 / DSM 7513).